Consider the following 202-residue polypeptide: NADH-quinone oxidoreductase subunit C (202 aa).

This sequence belongs to the complex I 30 kDa subunit family. As to quaternary structure, NDH-1 is composed of 14 different subunits. Subunits NuoB, C, D, E, F, and G constitute the peripheral sector of the complex.

It localises to the cell inner membrane. The catalysed reaction is a quinone + NADH + 5 H(+)(in) = a quinol + NAD(+) + 4 H(+)(out). NDH-1 shuttles electrons from NADH, via FMN and iron-sulfur (Fe-S) centers, to quinones in the respiratory chain. The immediate electron acceptor for the enzyme in this species is believed to be ubiquinone. Couples the redox reaction to proton translocation (for every two electrons transferred, four hydrogen ions are translocated across the cytoplasmic membrane), and thus conserves the redox energy in a proton gradient. This is NADH-quinone oxidoreductase subunit C from Brucella canis (strain ATCC 23365 / NCTC 10854 / RM-666).